A 397-amino-acid polypeptide reads, in one-letter code: Probable pyruvate dehydrogenase E1 component subunit alpha, mitochondrial (397 aa).

His86, Tyr112, Arg113, Gly159, Val161, Asp190, Gly191, Ala192, and Asn219 together coordinate pyruvate. Tyr112, Arg113, Gly159, Val161, Asp190, Gly191, Ala192, Asn219, and His286 together coordinate thiamine diphosphate. Residue Asp190 participates in Mg(2+) binding. Asn219 contacts Mg(2+).

As to quaternary structure, tetramer of 2 alpha and 2 beta subunits. Thiamine diphosphate serves as cofactor. The cofactor is Mg(2+).

The protein resides in the mitochondrion matrix. It catalyses the reaction N(6)-[(R)-lipoyl]-L-lysyl-[protein] + pyruvate + H(+) = N(6)-[(R)-S(8)-acetyldihydrolipoyl]-L-lysyl-[protein] + CO2. E1 activity is regulated by phosphorylation (inactivation) and dephosphorylation (activation) of the alpha subunit. Its function is as follows. The pyruvate dehydrogenase complex catalyzes the overall conversion of pyruvate to acetyl-CoA and CO(2). It contains multiple copies of three enzymatic components: pyruvate dehydrogenase (E1), dihydrolipoamide acetyltransferase (E2) and lipoamide dehydrogenase (E3). The protein is Probable pyruvate dehydrogenase E1 component subunit alpha, mitochondrial of Caenorhabditis elegans.